The following is a 129-amino-acid chain: Holo-[acyl-carrier-protein] synthase (129 aa).

Asp-8 and Glu-58 together coordinate Mg(2+).

The protein belongs to the P-Pant transferase superfamily. AcpS family. Mg(2+) serves as cofactor.

It is found in the cytoplasm. The enzyme catalyses apo-[ACP] + CoA = holo-[ACP] + adenosine 3',5'-bisphosphate + H(+). Its function is as follows. Transfers the 4'-phosphopantetheine moiety from coenzyme A to a Ser of acyl-carrier-protein. The protein is Holo-[acyl-carrier-protein] synthase of Geobacillus kaustophilus (strain HTA426).